The chain runs to 1068 residues: MCPPEQPAKAMAPSKSNQAAKSAVPTKEEKSADLVMATNNSSIVSKRSVEMLYYPEPHFFCHFVKKPQRRAPLINRGYWLRMHAMEESVRRFMRESPDKPKFVLNLGCGFDPLPFILLSADRSLCSQTTFVDIDYEKLMLNKKAALREAGALTQILEDVEFGPDESAVQIRSGQYVAVGCDLKNLDKLDRVLRAEVLPAECAVLFLAEVSLTYMDVKSANAVVSWASRLSNDAQFCILEQYFPDGPSHPFAATMMEHFGKLGAPLHSIHEFPSLSDQERRFTEAGWTHAHARSLWDLWSDDEFVPAVLRTSLDSIESFDEWEEFALFASHYFLLHASTRPGTKGSKSAAATADVGPSRQAVTRSNEFRLIPNTSLPTGQRRFGALVPGGEAVIGIHSGWGRQTRVADTDVYKTSKDNIDSHARFPSSNDISARLCHTITAFSDDGDCLLVGGRTSPASALQDTWVRKNNVWQAGSSLPLARFRHCATRVTLGSDRSSGSVLIYGGKTSDGTTLDTWLLWNDNGEGWSSVTVRTMNDAPAPKARFGACLASIDSTNGLLFGGIGPDGTILEDFWTWKLYEEADGSLCMELTDQTGSLRNIALGFDILPRFGATVSSTAQGLVVSGGIIPRRVVPFDGEILLLDSATLLDCIKNGLPLTTPILSTIGLDAGFTGPRPLLVGHVSHAISTDQVLLLGGGAVCFSFGTFWTRGTWMLCPVGERAVNDWALVCENVEKPTKAKAAAQIPAKTKKQKASKKYKPEKYKSTTKVTPIRRVTVESADEFQQILEDAQPVIIESADIGPCTELWTKEYLVNTVGSDRKVIVHAAETETMSFRTKNFKYESKTFGTFMDEVHAGGRQYLRSISEKQPAKLPANLAADFPSLSSDFRLPEALKTVVENAHSSPLRISGPVTLWLHYDVMANVLCQIQGEKRLILYPPSDVPHLDVPAGASSSNINVFQNRADGAIALIPHTSPHEARLKRGDILFIPPLWLHTAAPTGKVSVAVNVFFRNLSQGYALGRDVYGNRDVQAYEKGRKDLEKLVKSFSGLPPDMARFYLLRLADELQETAEQ.

Residues 1–31 are disordered; it reads MCPPEQPAKAMAPSKSNQAAKSAVPTKEEKS. Residues Arg81, Gly107, Asp134, 181 to 182, and Glu208 each bind S-adenosyl-L-methionine; that span reads DL. The JmjC domain maps to 876–1024; sequence ADFPSLSSDF…ALGRDVYGNR (149 aa).

It belongs to the methyltransferase superfamily. LCMT family.

It catalyses the reaction 7-[(3S)-3-amino-3-carboxypropyl]wyosine(37) in tRNA(Phe) + S-adenosyl-L-methionine = 7-[(3S)-(3-amino-3-methoxycarbonyl)propyl]wyosine(37) in tRNA(Phe) + S-adenosyl-L-homocysteine. It carries out the reaction 7-[(3S)-(3-amino-3-methoxycarbonyl)propyl]wyosine(37) in tRNA(Phe) + S-adenosyl-L-methionine + CO2 = wybutosine(37) in tRNA(Phe) + S-adenosyl-L-homocysteine + 2 H(+). Its pathway is tRNA modification; wybutosine-tRNA(Phe) biosynthesis. In terms of biological role, probable S-adenosyl-L-methionine-dependent methyltransferase that acts as a component of the wybutosine biosynthesis pathway. Wybutosine is a hyper modified guanosine with a tricyclic base found at the 3'-position adjacent to the anticodon of eukaryotic phenylalanine tRNA. May methylate the carboxyl group of leucine residues to form alpha-leucine ester residues. The sequence is that of tRNA wybutosine-synthesizing protein 4 (ppm2) from Emericella nidulans (strain FGSC A4 / ATCC 38163 / CBS 112.46 / NRRL 194 / M139) (Aspergillus nidulans).